Reading from the N-terminus, the 1202-residue chain is DNA-directed RNA polymerase subunit beta (1202 aa).

The interval 1154–1202 (NMDEDDDEVVNVDALAKYAEEHKADDKKNEEENKSEATSTTTDDKTNQN) is disordered. A compositionally biased stretch (basic and acidic residues) spans 1171–1188 (YAEEHKADDKKNEEENKS).

The protein belongs to the RNA polymerase beta chain family. The RNAP catalytic core consists of 2 alpha, 1 beta, 1 beta' and 1 omega subunit. When a sigma factor is associated with the core the holoenzyme is formed, which can initiate transcription.

It carries out the reaction RNA(n) + a ribonucleoside 5'-triphosphate = RNA(n+1) + diphosphate. Functionally, DNA-dependent RNA polymerase catalyzes the transcription of DNA into RNA using the four ribonucleoside triphosphates as substrates. The polypeptide is DNA-directed RNA polymerase subunit beta (Limosilactobacillus reuteri (strain DSM 20016) (Lactobacillus reuteri)).